Consider the following 549-residue polypeptide: Polymorphic pseudokinase ROP5 (549 aa).

A signal peptide spans 1 to 24 (MATKLARLATWLVLVGCLLWRAGA). One can recognise a Protein kinase domain in the interval 234–527 (LKLVEPLRVG…LEAMETPEFL (294 aa)). Residues Arg241, Asp244, Arg245, Ser246, Lys263, Met337, Pro338, Ala340, Asp343, and Asp393 each coordinate ATP. ADP is bound at residue Asp244. 5 residues coordinate ADP: Ser246, Lys263, Met337, Pro338, and Ala340. Asp393 contributes to the ADP binding site. Mg(2+) is bound by residues Asp393 and Asp407. A glycan (N-linked (GlcNAc...) asparagine) is linked at Asn434. Cys458 and Cys492 are joined by a disulfide.

This sequence belongs to the protein kinase superfamily. Ser/Thr protein kinase family. As to quaternary structure, component of a complex at least composed of ROP18 and ROP5. Interacts with GRA7. Interacts with ROP17. Interacts with mouse IRGA6/IIGP1; the interaction results in inhibition of IRGA6/IIGP1 GTPase activity and/or oligomerization.

The protein localises to the secreted. It is found in the parasitophorous vacuole. It localises to the cytoplasmic vesicle. Its subcellular location is the secretory vesicle. The protein resides in the rhoptry. Pseudokinase. Essential for virulence in the type I lineage. Mediates parasite survival in mouse monocytes. Required for the parasite ability to resist mouse innate immune effectors triggered by the IFN-gamma (IFNG). Reduces the accumulation of mouse IRGA6 (IIGP1) and IRGB6 (TGTP1/TGTP2), immunity-related GTPases (IRGs) that protect mice from infection by certain intracellular pathogens, on the parasitophorous vacuole and IRG-mediated killing of parasites by mouse cells. Regulates the activity of ROP18, an active kinase that targets IRGs to prevent IRG-mediated parasite killing by mouse cells. Acts as an allosteric inhibitor of mouse IRGA6 (IIGP1). Does not affect IFN-gamma (IFNG)-mediated parasite killing in human cells that do not possess the large variety of IRGs. This is Polymorphic pseudokinase ROP5 from Toxoplasma gondii.